We begin with the raw amino-acid sequence, 37 residues long: Large ribosomal subunit protein bL36 (37 aa).

Belongs to the bacterial ribosomal protein bL36 family.

The polypeptide is Large ribosomal subunit protein bL36 (Listeria innocua serovar 6a (strain ATCC BAA-680 / CLIP 11262)).